Reading from the N-terminus, the 413-residue chain is Serine hydroxymethyltransferase (413 aa).

(6S)-5,6,7,8-tetrahydrofolate-binding positions include Leu-117 and 121 to 123; that span reads GHL. At Lys-226 the chain carries N6-(pyridoxal phosphate)lysine. (6S)-5,6,7,8-tetrahydrofolate contacts are provided by residues Glu-239 and 349 to 351; that span reads SPF.

This sequence belongs to the SHMT family. Homodimer. Pyridoxal 5'-phosphate is required as a cofactor.

It is found in the cytoplasm. It carries out the reaction (6R)-5,10-methylene-5,6,7,8-tetrahydrofolate + glycine + H2O = (6S)-5,6,7,8-tetrahydrofolate + L-serine. It functions in the pathway one-carbon metabolism; tetrahydrofolate interconversion. Its pathway is amino-acid biosynthesis; glycine biosynthesis; glycine from L-serine: step 1/1. Catalyzes the reversible interconversion of serine and glycine with tetrahydrofolate (THF) serving as the one-carbon carrier. This reaction serves as the major source of one-carbon groups required for the biosynthesis of purines, thymidylate, methionine, and other important biomolecules. Also exhibits THF-independent aldolase activity toward beta-hydroxyamino acids, producing glycine and aldehydes, via a retro-aldol mechanism. The protein is Serine hydroxymethyltransferase of Bacillus cereus (strain ATCC 10987 / NRS 248).